Reading from the N-terminus, the 730-residue chain is ABC transporter G family member 3 (730 aa).

A compositionally biased stretch (low complexity) spans methionine 1–serine 28. The interval methionine 1–glycine 100 is disordered. A compositionally biased stretch (acidic residues) spans aspartate 47 to aspartate 56. Residues asparagine 72–methionine 91 show a composition bias toward polar residues. Serine 93 is modified (phosphoserine). The 243-residue stretch at isoleucine 114–isoleucine 356 folds into the ABC transporter domain. Glycine 151–serine 158 is a binding site for ATP. An ABC transmembrane type-2 domain is found at threonine 441–tyrosine 653. The next 6 helical transmembrane spans lie at leucine 465 to serine 485, alanine 495 to leucine 515, alanine 532 to isoleucine 552, valine 575 to isoleucine 595, tyrosine 600 to phenylalanine 620, and methionine 689 to phenylalanine 709.

Belongs to the ABC transporter superfamily. ABCG family. Eye pigment precursor importer (TC 3.A.1.204) subfamily.

The protein resides in the membrane. In Arabidopsis thaliana (Mouse-ear cress), this protein is ABC transporter G family member 3 (ABCG3).